Reading from the N-terminus, the 322-residue chain is Arginase-1 (322 aa).

Residues 1 to 27 (MSFKSQSIGIIGAPFSKGQPRGGVEEG) form a disordered region. At serine 7 the chain carries Phosphoserine. At lysine 17 the chain carries N6-succinyllysine. Serine 72 is subject to Phosphoserine. N6-succinyllysine is present on lysine 75. Residues histidine 101, aspartate 124, histidine 126, and aspartate 128 each contribute to the Mn(2+) site. Substrate-binding positions include 126 to 130 (HTDIN) and 137 to 139 (TGN). Serine 163 carries the phosphoserine modification. Aspartate 183 is a binding site for substrate. Serine 217 bears the Phosphoserine mark. Aspartate 232 and aspartate 234 together coordinate Mn(2+). 2 residues coordinate substrate: threonine 246 and glutamate 277.

This sequence belongs to the arginase family. As to quaternary structure, homotrimer. Interacts with CMTM6. It depends on Mn(2+) as a cofactor.

It is found in the cytoplasm. The enzyme catalyses L-arginine + H2O = urea + L-ornithine. It participates in nitrogen metabolism; urea cycle; L-ornithine and urea from L-arginine: step 1/1. The polypeptide is Arginase-1 (ARG1) (Sus scrofa (Pig)).